A 142-amino-acid polypeptide reads, in one-letter code: Hemoglobin subunit alpha-A (142 aa).

One can recognise a Globin domain in the interval 2–142 (VLSAADKTNV…VATVLTAKYR (141 aa)). Position 59 (H59) interacts with O2. H88 serves as a coordination point for heme b.

The protein belongs to the globin family. Heterotetramer of two alpha chains and two beta chains. As to expression, red blood cells.

Its function is as follows. Involved in oxygen transport from the lung to the various peripheral tissues. The sequence is that of Hemoglobin subunit alpha-A (HBAA) from Apus apus (Common swift).